The chain runs to 236 residues: Phosphoribosylaminoimidazole-succinocarboxamide synthase (236 aa).

It belongs to the SAICAR synthetase family.

The enzyme catalyses 5-amino-1-(5-phospho-D-ribosyl)imidazole-4-carboxylate + L-aspartate + ATP = (2S)-2-[5-amino-1-(5-phospho-beta-D-ribosyl)imidazole-4-carboxamido]succinate + ADP + phosphate + 2 H(+). It participates in purine metabolism; IMP biosynthesis via de novo pathway; 5-amino-1-(5-phospho-D-ribosyl)imidazole-4-carboxamide from 5-amino-1-(5-phospho-D-ribosyl)imidazole-4-carboxylate: step 1/2. This Pseudomonas aeruginosa (strain LESB58) protein is Phosphoribosylaminoimidazole-succinocarboxamide synthase.